The primary structure comprises 476 residues: ATP synthase subunit beta (476 aa).

162–169 (GGAGVGKT) contacts ATP.

Belongs to the ATPase alpha/beta chains family. As to quaternary structure, F-type ATPases have 2 components, CF(1) - the catalytic core - and CF(0) - the membrane proton channel. CF(1) has five subunits: alpha(3), beta(3), gamma(1), delta(1), epsilon(1). CF(0) has three main subunits: a(1), b(2) and c(9-12). The alpha and beta chains form an alternating ring which encloses part of the gamma chain. CF(1) is attached to CF(0) by a central stalk formed by the gamma and epsilon chains, while a peripheral stalk is formed by the delta and b chains.

It is found in the cell membrane. The catalysed reaction is ATP + H2O + 4 H(+)(in) = ADP + phosphate + 5 H(+)(out). Produces ATP from ADP in the presence of a proton gradient across the membrane. The catalytic sites are hosted primarily by the beta subunits. The chain is ATP synthase subunit beta from Mycoplasma capricolum subsp. capricolum (strain California kid / ATCC 27343 / NCTC 10154).